A 757-amino-acid polypeptide reads, in one-letter code: 5-methyltetrahydropteroyltriglutamate--homocysteine methyltransferase (757 aa).

Residues 16–19 (RELK) and K112 contribute to the 5-methyltetrahydropteroyltri-L-glutamate site. Residues 433–435 (IGS) and E486 contribute to the L-homocysteine site. Residues 433 to 435 (IGS) and E486 contribute to the L-methionine site. Residues 517–518 (RC) and W563 contribute to the 5-methyltetrahydropteroyltri-L-glutamate site. D601 contributes to the L-homocysteine binding site. Residue D601 coordinates L-methionine. E607 lines the 5-methyltetrahydropteroyltri-L-glutamate pocket. Zn(2+)-binding residues include H643, C645, and E667. The active-site Proton donor is the H696. Residue C728 coordinates Zn(2+).

This sequence belongs to the vitamin-B12 independent methionine synthase family. It depends on Zn(2+) as a cofactor.

The enzyme catalyses 5-methyltetrahydropteroyltri-L-glutamate + L-homocysteine = tetrahydropteroyltri-L-glutamate + L-methionine. It functions in the pathway amino-acid biosynthesis; L-methionine biosynthesis via de novo pathway; L-methionine from L-homocysteine (MetE route): step 1/1. In terms of biological role, catalyzes the transfer of a methyl group from 5-methyltetrahydrofolate to homocysteine resulting in methionine formation. This chain is 5-methyltetrahydropteroyltriglutamate--homocysteine methyltransferase, found in Histophilus somni (strain 2336) (Haemophilus somnus).